We begin with the raw amino-acid sequence, 114 residues long: U5-lycotoxin-Ls1a (114 aa).

The N-terminal stretch at 1 to 20 (MKYQILFGVVFLTLLSYCYS) is a signal peptide. The propeptide occupies 21 to 45 (EIEDEFENFVDEEMVEADDPFSLAR). Cystine bridges form between cysteine 51–cysteine 66, cysteine 65–cysteine 93, and cysteine 77–cysteine 91.

Belongs to the neurotoxin 19 (CSTX) family. 04 (U1-Lctx) subfamily. Expressed by the venom gland.

It localises to the secreted. The polypeptide is U5-lycotoxin-Ls1a (Lycosa singoriensis (Wolf spider)).